The following is a 168-amino-acid chain: NADH-quinone oxidoreductase subunit B (168 aa).

Positions 49, 50, 114, and 144 each coordinate [4Fe-4S] cluster.

The protein belongs to the complex I 20 kDa subunit family. In terms of assembly, NDH-1 is composed of 14 different subunits. Subunits NuoB, C, D, E, F, and G constitute the peripheral sector of the complex. It depends on [4Fe-4S] cluster as a cofactor.

Its subcellular location is the cell membrane. The enzyme catalyses a quinone + NADH + 5 H(+)(in) = a quinol + NAD(+) + 4 H(+)(out). In terms of biological role, NDH-1 shuttles electrons from NADH, via FMN and iron-sulfur (Fe-S) centers, to quinones in the respiratory chain. Couples the redox reaction to proton translocation (for every two electrons transferred, four hydrogen ions are translocated across the cytoplasmic membrane), and thus conserves the redox energy in a proton gradient. The chain is NADH-quinone oxidoreductase subunit B from Wolbachia pipientis wMel.